The primary structure comprises 239 residues: Lysophospholipase-like protein 1 (239 aa).

A2 carries the post-translational modification N-acetylalanine. Catalysis depends on charge relay system residues S125, D180, and H212.

Belongs to the AB hydrolase superfamily. AB hydrolase 2 family.

The protein localises to the cytoplasm. Its subcellular location is the cytosol. The enzyme catalyses S-hexadecanoyl-L-cysteinyl-[protein] + H2O = L-cysteinyl-[protein] + hexadecanoate + H(+). Palmitoyl thioesterase that catalyzes depalmitoylation of CGAS and KCNMA1. Acts as a regulator of innate immunity by mediating depalmitoylation of CGAS, thereby preventing CGAS homodimerization and cyclic GMP-AMP synthase activity. Does not exhibit phospholipase nor triacylglycerol lipase activity, able to hydrolyze only short chain substrates due to its shallow active site. The chain is Lysophospholipase-like protein 1 from Mus musculus (Mouse).